Consider the following 312-residue polypeptide: Aspartate carbamoyltransferase catalytic subunit (312 aa).

Carbamoyl phosphate contacts are provided by Arg-58 and Thr-59. Residue Lys-86 coordinates L-aspartate. Positions 108, 136, and 139 each coordinate carbamoyl phosphate. L-aspartate is bound by residues Arg-169 and Arg-223. Carbamoyl phosphate is bound by residues Gly-264 and Pro-265.

It belongs to the aspartate/ornithine carbamoyltransferase superfamily. ATCase family. Heterododecamer (2C3:3R2) of six catalytic PyrB chains organized as two trimers (C3), and six regulatory PyrI chains organized as three dimers (R2).

It carries out the reaction carbamoyl phosphate + L-aspartate = N-carbamoyl-L-aspartate + phosphate + H(+). Its pathway is pyrimidine metabolism; UMP biosynthesis via de novo pathway; (S)-dihydroorotate from bicarbonate: step 2/3. Its function is as follows. Catalyzes the condensation of carbamoyl phosphate and aspartate to form carbamoyl aspartate and inorganic phosphate, the committed step in the de novo pyrimidine nucleotide biosynthesis pathway. The sequence is that of Aspartate carbamoyltransferase catalytic subunit from Acetivibrio thermocellus (strain ATCC 27405 / DSM 1237 / JCM 9322 / NBRC 103400 / NCIMB 10682 / NRRL B-4536 / VPI 7372) (Clostridium thermocellum).